The primary structure comprises 286 residues: ATP synthase gamma chain (286 aa).

Belongs to the ATPase gamma chain family. As to quaternary structure, F-type ATPases have 2 components, CF(1) - the catalytic core - and CF(0) - the membrane proton channel. CF(1) has five subunits: alpha(3), beta(3), gamma(1), delta(1), epsilon(1). CF(0) has three main subunits: a, b and c.

The protein localises to the cell membrane. Produces ATP from ADP in the presence of a proton gradient across the membrane. The gamma chain is believed to be important in regulating ATPase activity and the flow of protons through the CF(0) complex. This is ATP synthase gamma chain from Bacillus mycoides (strain KBAB4) (Bacillus weihenstephanensis).